The sequence spans 259 residues: Ribonuclease HII (259 aa).

The 188-residue stretch at 72 to 259 (ERIAGIDEAG…PVREALGVQS (188 aa)) folds into the RNase H type-2 domain. Positions 78, 79, and 170 each coordinate a divalent metal cation.

It belongs to the RNase HII family. Mn(2+) serves as cofactor. The cofactor is Mg(2+).

It is found in the cytoplasm. It carries out the reaction Endonucleolytic cleavage to 5'-phosphomonoester.. Endonuclease that specifically degrades the RNA of RNA-DNA hybrids. The protein is Ribonuclease HII of Geobacillus thermodenitrificans (strain NG80-2).